Here is a 501-residue protein sequence, read N- to C-terminus: MRLVSRRRLKGLALVAFALIGITIFVRILMEFQLEREVSFYKKFFRLKKDGLHGVYNPIDIKQIPKQTIDDLYRAKMETVSASKPIDWSKYAYVNYVTEPNYLCNTLIMFHALIKKFGTKAKLELLISNELFKSEIQSRNEQVQRILKKIRELDSEQIVIKEVQNIVKPTDQSPWNESLTKLLVFGLTEYERIIYLDNDAILQDKMDELFFLPNDITFAAPLTYWFMSEKDLEKTYKEVQHDKMSINLNKYTKQLSNRIRNGKEIYNHLPALPQSLYLNSDRVAKEILDSTSSASPLFDADSLKKVGKVKFASNLMVIKPSQETYDYIINDCLPRIVNKKEKYDMDLINEELYNLRHVVSRQVTLFRKLRSAFKPSILVLPFGTYGILTGSIRKPQEHMIMRNDILGYKNIDDEGNEIQKSIEEVVLNNKYIHFSDFPLGKPWAYSSFDQLKCRVDPASSKDVAADQKNCDVWNSIYESYFTQRMVCSKDDSPKASEIQAA.

The Cytoplasmic portion of the chain corresponds to 1–11 (MRLVSRRRLKG). The helical; Signal-anchor for type II membrane protein transmembrane segment at 12–32 (LALVAFALIGITIFVRILMEF) threads the bilayer. The Lumenal segment spans residues 33 to 501 (QLEREVSFYK…SPKASEIQAA (469 aa)). N176 is a glycosylation site (N-linked (GlcNAc...) asparagine). The short motif at 197–199 (DND) is the DXD element.

It belongs to the GNT1 family.

It is found in the golgi apparatus membrane. The protein localises to the vacuole membrane. Functionally, N-acetylglucosaminyltransferase involved in the Golgi-specific modification of N-linked glycans. The chain is Glucose N-acetyltransferase 1 (GNT1) from Candida glabrata (strain ATCC 2001 / BCRC 20586 / JCM 3761 / NBRC 0622 / NRRL Y-65 / CBS 138) (Yeast).